The following is a 297-amino-acid chain: Alpha-tubulin N-acetyltransferase 1 (297 aa).

The 184-residue stretch at 1 to 184 folds into the N-acetyltransferase domain; it reads MDFPYDLNAL…NNFVVFAGFF (184 aa). Acetyl-CoA contacts are provided by residues 118-131 and 154-163; these read FYVT…GYGS and SPKFLSFLEK. Residues 226 to 297 are disordered; the sequence is FVRPGGPPHS…SLNRSRLSFH (72 aa). A compositionally biased stretch (pro residues) spans 230–240; sequence GGPPHSPPLLP. Residues 241-264 are compositionally biased toward low complexity; it reads SSPQSRSLSVGSSPSRAPLRPAAA. Polar residues-rich tracts occupy residues 266–278 and 286–297; these read VLQQ…SPLN and TSSLNRSRLSFH.

The protein belongs to the acetyltransferase ATAT1 family. As to quaternary structure, monomer.

The protein resides in the cytoplasm. It localises to the membrane. Its subcellular location is the clathrin-coated pit. The protein localises to the cell junction. It is found in the focal adhesion. The protein resides in the cell projection. It localises to the axon. Its subcellular location is the cytoskeleton. The protein localises to the spindle. It carries out the reaction L-lysyl-[alpha-tubulin] + acetyl-CoA = N(6)-acetyl-L-lysyl-[alpha-tubulin] + CoA + H(+). In terms of biological role, specifically acetylates 'Lys-40' in alpha-tubulin on the lumenal side of microtubules. Promotes microtubule destabilization and accelerates microtubule dynamics; this activity may be independent of acetylation activity. Acetylates alpha-tubulin with a slow enzymatic rate, due to a catalytic site that is not optimized for acetyl transfer. Enters the microtubule through each end and diffuses quickly throughout the lumen of microtubules. Acetylates only long/old microtubules because of its slow acetylation rate since it does not have time to act on dynamically unstable microtubules before the enzyme is released. May be involved in neuron development. Acetylates alpha-tubulin in neurons, but not in cilia. The sequence is that of Alpha-tubulin N-acetyltransferase 1 from Danio rerio (Zebrafish).